The following is a 479-amino-acid chain: Splicing factor ESS-2 homolog (479 aa).

Met1 bears the N-acetylmethionine mark. Disordered stretches follow at residues 1 to 38 and 95 to 152; these read MGTP…RSRQ and GKIS…PSLD. A Phosphothreonine modification is found at Thr3. A compositionally biased stretch (low complexity) spans 7 to 19; it reads SAGALFLSSASAP. A compositionally biased stretch (acidic residues) spans 135–145; that stretch reads DDGEAGEEEEK. Lys145 is covalently cross-linked (Glycyl lysine isopeptide (Lys-Gly) (interchain with G-Cter in SUMO2)). Phosphoserine is present on Ser295. Position 389 is a phosphothreonine (Thr389). Ser394 and Ser398 each carry phosphoserine. Residues 415-479 form a disordered region; sequence RALRASYTPS…PARRKASDFF (65 aa). Residues 433-454 show a composition bias toward low complexity; sequence TPAGGPQTPTSTPAPGSATRTP. Polar residues predominate over residues 455–466; that stretch reads LTQDPASITDNL.

It belongs to the ESS2 family. As to quaternary structure, identified in the spliceosome C complex. Interacts with FRA10AC1. In terms of tissue distribution, in the adult, widely expressed with highest expression in the testis and brain. Also widely expressed in the embryo with highest levels in the anterior pons.

The protein resides in the nucleus. May be involved in pre-mRNA splicing. The sequence is that of Splicing factor ESS-2 homolog (Ess2) from Mus musculus (Mouse).